A 1215-amino-acid polypeptide reads, in one-letter code: Pesticidal crystal protein Cry1Ka (1215 aa).

Belongs to the delta endotoxin family.

Its function is as follows. Promotes colloidosmotic lysis by binding to the midgut epithelial cells of insects. Selectively toxic to Artogeia rapae but not active on Plutella xylostella. The protein is Pesticidal crystal protein Cry1Ka (cry1Ka) of Bacillus thuringiensis subsp. morrisoni.